A 266-amino-acid chain; its full sequence is Transcription regulator FGM4 (266 aa).

The disordered stretch occupies residues 17–36 (KTQNRLAKRKSRIHAGKQQG). Residues 18-31 (TQNRLAKRKSRIHA) show a composition bias toward basic residues. ANK repeat units follow at residues 183–212 (KPGSPLHIASAMGHLKVVKTLITYGANVNE) and 216–245 (AGYSPIHYATRNNHTAIVALLLEKGADWSY).

The protein localises to the nucleus. Its function is as follows. Transcription regulator; part of the Fg3_54/C64 gene cluster that mediates the biosynthesis of the octapeptide fusaoctaxin A, a virulence factor that is required for cell-to-cell invasiveness of plant host. Positively regulates the expression the Fg3_54/C64 gene cluster. In Gibberella zeae (strain ATCC MYA-4620 / CBS 123657 / FGSC 9075 / NRRL 31084 / PH-1) (Wheat head blight fungus), this protein is Transcription regulator FGM4.